The sequence spans 846 residues: Leucine--tRNA ligase (846 aa).

The 'HIGH' region motif lies at 42-52; it reads PYPSGNLHMGH. Positions 586–590 match the 'KMSKS' region motif; sequence KMSKS. Lys-589 provides a ligand contact to ATP.

The protein belongs to the class-I aminoacyl-tRNA synthetase family.

Its subcellular location is the cytoplasm. It carries out the reaction tRNA(Leu) + L-leucine + ATP = L-leucyl-tRNA(Leu) + AMP + diphosphate. In Heliobacterium modesticaldum (strain ATCC 51547 / Ice1), this protein is Leucine--tRNA ligase.